We begin with the raw amino-acid sequence, 534 residues long: MSSSDDEVLVWGPGFGSECGEQTSGLEAGSTAPRGPGPDPGPEPGAPQSGEGEGGDGFPDPEGFESEREVLEAGGPVLLGCEGRPGSPADDTGYVVQLSDESVAAILRQLADLDLLGIRRHMSPESHGVGDVSPLRDVEARPGSRGAAAQRCGEAARAEAGPRWVGRPRAGRAWGNPKRSTNVAVDRQWPPSVSPARLFSDSESSDECSEIQPMRVSIYPKDGGQAKLNSPKDPRDTPRHSNVQGRETLPNVPGTCLSSAPRGLISVVERQGKQGDAEQETISPPKKIQSVLWGKGGSLPSFPGVAAAAATAAAATGRLPRPSPRRKRVQEKKSLGGVSKPALGRTFPSWGRGISATPLDPATFPPISGIPLLGRSQKYASVPWGAKESKHTGAGKKSVARRARELVAATAVSGEDNDPNRDPVPKGQLATDRPWPSCPRVHHGEPSTANLSIRGGQDSGNSKPVAMNKGEVMPRGPGPSGDQKPADHHPRLKRRQQPPRRQGCPRCLVLQKEIDDLKEQLASMQYLAEKFRIL.

Disordered regions lie at residues 1–93 (MSSS…DDTG), 123–260 (SPES…LSSA), 313–349 (AAAT…TFPS), and 383–505 (PWGA…QGCP). Residues 35-45 (GPGPDPGPEPG) are compositionally biased toward pro residues. A phosphoserine mark is found at Ser-87 and Ser-123. Low complexity predominate over residues 145 to 161 (RGAAAQRCGEAARAEAG). Basic and acidic residues predominate over residues 230–239 (SPKDPRDTPR).

This is an uncharacterized protein from Bos taurus (Bovine).